Reading from the N-terminus, the 157-residue chain is Small ribosomal subunit protein uS7 (157 aa).

This sequence belongs to the universal ribosomal protein uS7 family. In terms of assembly, part of the 30S ribosomal subunit. Contacts proteins S9 and S11.

Functionally, one of the primary rRNA binding proteins, it binds directly to 16S rRNA where it nucleates assembly of the head domain of the 30S subunit. Is located at the subunit interface close to the decoding center, probably blocks exit of the E-site tRNA. The protein is Small ribosomal subunit protein uS7 of Verminephrobacter eiseniae (strain EF01-2).